The sequence spans 500 residues: Phenylalanine--tRNA ligase alpha subunit (500 aa).

L-phenylalanine-binding positions include threonine 343, 382–384, and phenylalanine 423; that span reads QID. A Mg(2+)-binding site is contributed by glutamate 425. L-phenylalanine is bound at residue phenylalanine 448.

It belongs to the class-II aminoacyl-tRNA synthetase family. Phe-tRNA synthetase alpha subunit type 2 subfamily. In terms of assembly, tetramer of two alpha and two beta subunits. Requires Mg(2+) as cofactor.

The protein localises to the cytoplasm. The catalysed reaction is tRNA(Phe) + L-phenylalanine + ATP = L-phenylalanyl-tRNA(Phe) + AMP + diphosphate + H(+). This is Phenylalanine--tRNA ligase alpha subunit from Pyrococcus abyssi (strain GE5 / Orsay).